The following is a 732-amino-acid chain: Catalase-peroxidase (732 aa).

The disordered stretch occupies residues 1 to 26 (MADNKKSPETGGITMQIPGKGRTNRD). Residues 96 to 219 (WHSAGTYRTF…LAAVQMGLIY (124 aa)) constitute a cross-link (tryptophyl-tyrosyl-methioninium (Trp-Tyr) (with M-245)). The Proton acceptor role is filled by His-97. Positions 219–245 (YVNPEGPDGNPDPVAAARDIREVFARM) form a cross-link, tryptophyl-tyrosyl-methioninium (Tyr-Met) (with W-96). His-260 contributes to the heme b binding site. The segment at 344-365 (KPKGEAGAGTVPDPHDPKKRHA) is disordered.

This sequence belongs to the peroxidase family. Peroxidase/catalase subfamily. Homodimer or homotetramer. Requires heme b as cofactor. Post-translationally, formation of the three residue Trp-Tyr-Met cross-link is important for the catalase, but not the peroxidase activity of the enzyme.

The enzyme catalyses H2O2 + AH2 = A + 2 H2O. It catalyses the reaction 2 H2O2 = O2 + 2 H2O. Bifunctional enzyme with both catalase and broad-spectrum peroxidase activity. The sequence is that of Catalase-peroxidase from Methanospirillum hungatei JF-1 (strain ATCC 27890 / DSM 864 / NBRC 100397 / JF-1).